Consider the following 224-residue polypeptide: Claudin-19 (224 aa).

Residues 1-7 are Cytoplasmic-facing; that stretch reads MANSGLQ. A helical transmembrane segment spans residues 8–28; the sequence is LLGYFLALGGWVGIIASTALP. Topologically, residues 29 to 81 are extracellular; it reads QWKQSSYAGDAIITAVGLYEGLWMSCASQSTGQVQCKLYDSLLALDGHIQSAR. C54 and C64 are oxidised to a cystine. Residues 82-102 traverse the membrane as a helical segment; sequence ALMVVAVLLGFVAMVLSVVGM. The Cytoplasmic segment spans residues 103 to 117; sequence KCTRVGDSNPTAKSR. A helical transmembrane segment spans residues 118-138; it reads VAISGGALFLLAGLCTLTAVS. Residues 139–160 lie on the Extracellular side of the membrane; the sequence is WYATLVTQEFFNPSTPVNARYE. A helical transmembrane segment spans residues 161–181; it reads FGPALFVGWASAGLAMLGGSF. Residues 182–224 are Cytoplasmic-facing; it reads LCCTCPEPERANSIPQPYRSGPSTAAREPVVKLPASVKGPLGV.

The protein belongs to the claudin family. As to quaternary structure, can form homo- and heteropolymeric tight junction strands. Interacts with other claudins including CLDN3, CLDN10, CLDN16 and CLDN18 with highest affinity for CLDN16. Interacts (via PDZ-binding motif TRV) with TJP1 (via PDZ domain). (Microbial infection) Interacts (via both extracellular domains) with Clostridium perfringens enterotoxin CPE; the interaction disrupts claudin assembly in tight junctions. Expressed in the corticomedullary axis of the TAL, specifically in the cortex and the outer stripe of outer medulla (OSOM) zone (at protein level). Expressed in peripheral nervous system, in Schwan cells (at protein level).

The protein localises to the cell junction. The protein resides in the tight junction. It localises to the cell membrane. The catalysed reaction is Mg(2+)(in) = Mg(2+)(out). The enzyme catalyses Ca(2+)(in) = Ca(2+)(out). It carries out the reaction Na(+)(in) = Na(+)(out). It catalyses the reaction K(+)(in) = K(+)(out). The catalysed reaction is Rb(+)(in) = Rb(+)(out). The enzyme catalyses Cs(+)(in) = Cs(+)(out). It carries out the reaction Li(+)(in) = Li(+)(out). Forms paracellular channels: coassembles with CLDN16 into tight junction strands with cation-selective channels through the strands, conveying epithelial permeability in a process known as paracellular tight junction permeability. Involved in the maintenance of ion gradients along the nephron. In the thick ascending limb (TAL) of Henle's loop, facilitates sodium paracellular permeability from the interstitial compartment to the lumen, contributing to the lumen-positive transepithelial potential that drives paracellular magnesium and calcium reabsorption. Forms paracellular barriers on its own. In the peripheral nervous system, represents a major constituent of the tight junctions in Schwann cells and contributes to electrical sealing. During retinal neurogenesis, may regulate the barrier properties of tight junctions in retinal pigment epithelium, required for proper retinal tissue differentiation and vision. This Mus musculus (Mouse) protein is Claudin-19.